An 875-amino-acid chain; its full sequence is Valine--tRNA ligase (875 aa).

The short motif at 45–55 (PNVTGVLHMGH) is the 'HIGH' region element. Residues 524–528 (KMSKS) carry the 'KMSKS' region motif. K527 is a binding site for ATP. Residues 803-837 (VKLLIDKTKELIRLEKQLEKYKMLKISVSKKLENE) adopt a coiled-coil conformation.

It belongs to the class-I aminoacyl-tRNA synthetase family. ValS type 1 subfamily. Monomer.

Its subcellular location is the cytoplasm. It catalyses the reaction tRNA(Val) + L-valine + ATP = L-valyl-tRNA(Val) + AMP + diphosphate. Catalyzes the attachment of valine to tRNA(Val). As ValRS can inadvertently accommodate and process structurally similar amino acids such as threonine, to avoid such errors, it has a 'posttransfer' editing activity that hydrolyzes mischarged Thr-tRNA(Val) in a tRNA-dependent manner. This is Valine--tRNA ligase from Borrelia garinii subsp. bavariensis (strain ATCC BAA-2496 / DSM 23469 / PBi) (Borreliella bavariensis).